The following is a 428-amino-acid chain: Enolase (428 aa).

Glutamine 163 is a binding site for (2R)-2-phosphoglycerate. The active-site Proton donor is glutamate 205. Residues aspartate 242, glutamate 285, and aspartate 312 each coordinate Mg(2+). Residues lysine 337, arginine 366, serine 367, and lysine 388 each contribute to the (2R)-2-phosphoglycerate site. The Proton acceptor role is filled by lysine 337.

The protein belongs to the enolase family. Mg(2+) is required as a cofactor.

It localises to the cytoplasm. The protein resides in the secreted. The protein localises to the cell surface. It catalyses the reaction (2R)-2-phosphoglycerate = phosphoenolpyruvate + H2O. It functions in the pathway carbohydrate degradation; glycolysis; pyruvate from D-glyceraldehyde 3-phosphate: step 4/5. In terms of biological role, catalyzes the reversible conversion of 2-phosphoglycerate (2-PG) into phosphoenolpyruvate (PEP). It is essential for the degradation of carbohydrates via glycolysis. In Persephonella marina (strain DSM 14350 / EX-H1), this protein is Enolase.